The sequence spans 168 residues: Scytalone dehydratase arp1 (168 aa).

Residues Tyr29 and Tyr49 each coordinate substrate. Residues His84 and His109 contribute to the active site. Asn130 contacts substrate.

This sequence belongs to the scytalone dehydratase family. As to quaternary structure, homotrimer. Each subunit contains an active site, located in the central part of the hydrophobic core of the monomer, which functions independently.

Its subcellular location is the endosome. It carries out the reaction scytalone = 1,3,8-trihydroxynaphthalene + H2O. It functions in the pathway pigment biosynthesis; melanin biosynthesis. Fenoxanil inhibits arp1 scytalone dehydratase activity. In terms of biological role, scytalone dehydratase; part of the gene cluster that mediates the biosynthesis of dihydroxynaphthalene (DHN)-melanin, a bluish-green pigment and a structural component of the conidial wall. The first step of the pathway is the production of the heptaketide naphtopyrone YWA1 by the polyketide synthase alb1 though condensation of acetyl-CoA with malonyl-CoA. The naphtopyrone YWA1 is then converted to the pentaketide 1,3,6,8-tetrahydroxynaphthalene (1,3,6,8-THN) by the heptaketide hydrolyase ayg1 though chain-length shortening. 1,3,6,8-THN is substrate of the hydroxynaphthalene reductase arp2 to yield scytalone. The scytalone dehydratase arp1 then reduces scytalone to 1,3,8-THN. 1,3,8-THN is also substrate of the hydroxynaphthalene reductase arp2 to yield vermelone. Vermelone is further converted by the multicopper oxidase abr1 to 1,8-DHN. Finally the laccase abr2 transforms 1,8-DHN to DHN-melanin. DHN-melanin biosynthesis appears to be initiated in endosomes where early enzymes (abl1, ayg1, arp1 and arp2) localize, with exocytosis leading to melanin deposition on the cell surface where late enzymes (abr1 and abr2) localize. DHN-melanin is an important structural component of the outer cell wall and is required for the presence of conidial surface hydrophobins. DHN-melanin also plays a crucial role in fungal virulence, including a protective role against the host's immune defenses. DHN-melanin also protects conidia against amoeba predation. The protein is Scytalone dehydratase arp1 of Aspergillus fumigatus (strain ATCC MYA-4609 / CBS 101355 / FGSC A1100 / Af293) (Neosartorya fumigata).